We begin with the raw amino-acid sequence, 310 residues long: Dicarboxylate carrier UCP2 (310 aa).

The Mitochondrial intermembrane segment spans residues 1–10; sequence MVGFRAGDVP. A helical membrane pass occupies residues 11–32; the sequence is PTATVKFIGAGTAACIADLFTF. 3 Solcar repeats span residues 11-107, 115-204, and 213-298; these read PTAT…VKQF, AGIG…IKDA, and DDLP…LKRA. The Mitochondrial matrix segment spans residues 33–78; sequence PLDTAKVRLQIQGENKASTNMGRGPVKYRGVFGTISTMVRVEGPRS. The helical transmembrane segment at 79–101 threads the bilayer; sequence LYSGLVAGLQRQMSFASVRIGLY. Over 102-120 the chain is Mitochondrial intermembrane; sequence DSVKQFYTKGSDHAGIGSR. The helical transmembrane segment at 121–137 threads the bilayer; the sequence is LMAGCTTGAMAVAVAQP. At 138-181 the chain is on the mitochondrial matrix side; it reads TDVLKVRFQAQVSAGASKRYHSTMDAYRTIAKEEGFRGLWKGTG. The helical transmembrane segment at 182 to 198 threads the bilayer; that stretch reads PNITRNAIVNCTELVTY. Residues 199–215 are Mitochondrial intermembrane-facing; it reads DLIKDALLKSSLMTDDL. Residues 216-235 form a helical membrane-spanning segment; it reads PCHFTSAFGAGFCTTIIASP. The Mitochondrial matrix segment spans residues 236–269; that stretch reads VDVVKTRYMNSAQGQYSSALNCAVAMLTKKGPKA. The chain crosses the membrane as a helical span at residues 270–292; sequence FFKGFMPSFLRLGSWNVVMFVTY. Residues 277-299 are purine nucleotide binding; that stretch reads SFLRLGSWNVVMFVTYEQLKRAM. Residues 293 to 310 lie on the Mitochondrial intermembrane side of the membrane; it reads EQLKRAMMAARQNWHTPL.

Belongs to the mitochondrial carrier (TC 2.A.29) family. Homotetramer. Adopts an asymmetrical dimer of dimers functional form.

It is found in the mitochondrion inner membrane. It catalyses the reaction L-aspartate(out) + phosphate(in) + H(+)(in) = L-aspartate(in) + phosphate(out) + H(+)(out). The catalysed reaction is oxaloacetate(out) + phosphate(in) + H(+)(in) = oxaloacetate(in) + phosphate(out) + H(+)(out). It carries out the reaction (S)-malate(out) + phosphate(in) + H(+)(in) = (S)-malate(in) + phosphate(out) + H(+)(out). The enzyme catalyses malonate(out) + phosphate(in) + H(+)(in) = malonate(in) + phosphate(out) + H(+)(out). It catalyses the reaction sulfate(out) + phosphate(in) + H(+)(in) = sulfate(in) + phosphate(out) + H(+)(out). The catalysed reaction is (S)-malate(out) = (S)-malate(in). It carries out the reaction L-aspartate(out) = L-aspartate(in). The enzyme catalyses phosphate(in) = phosphate(out). It catalyses the reaction chloride(in) = chloride(out). The catalysed reaction is H(+)(in) = H(+)(out). It carries out the reaction a long-chain fatty acid(out) = a long-chain fatty acid(in). Functionally, UCP are mitochondrial transporter proteins that create proton leaks across the inner mitochondrial membrane, thus uncoupling oxidative phosphorylation from ATP synthesis. As a result, energy is dissipated in the form of heat. In terms of biological role, antiporter that exports dicarboxylate intermediates of the Krebs cycle in exchange for phosphate plus a proton across the inner membrane of mitochondria, a process driven by mitochondrial motive force with an overall impact on glycolysis, glutaminolysis and glutathione-dependent redox balance. Continuous export of oxaloacetate and related four-carbon dicarboxylates from mitochondrial matrix into the cytosol negatively regulates the oxidation of acetyl-CoA substrates via the Krebs cycle, lowering the ATP/ADP ratio and reactive oxygen species (ROS) production. May mediate inducible proton entry into the mitochondrial matrix affecting ATP turnover as a protection mechanism against oxidative stress. The proton currents are most likely associated with fatty acid flipping across the inner membrane of mitochondria in a metabolic process regulated by free fatty acids and purine nucleotides. In Danio rerio (Zebrafish), this protein is Dicarboxylate carrier UCP2 (ucp2).